Consider the following 245-residue polypeptide: Transcriptional regulatory protein VxrB (245 aa).

Residues 31-142 form the Response regulatory domain; that stretch reads TLLLVEDDKN…ELFARIRAQL (112 aa). Asp-78 bears the 4-aspartylphosphate mark. Residues 151–245 constitute a DNA-binding region (ompR/PhoB-type); the sequence is DSKVVTSNLT…LRGVGYKMKA (95 aa).

Post-translationally, phosphorylated by VxrA.

It is found in the cytoplasm. In terms of biological role, member of the two-component regulatory system VxrB/VxrA involved in the regulation of diverses processes, including virulence, the type VI secretion system (T6SS) and biofilm formation. VxrB positively regulates the expression of the T6SS, a virulence nanomachine that directly translocates effectors into bacterial or host cells, thereby facilitating colonization by competing with sister cells and intestinal microbiota. In addition, it activates vpsL expression and biofilm formation, and represses motility. May regulate biofilm formation via its regulation of key biofilm regulators and cyclic di-GMP levels. Significantly contributes to both attack and defense via T6SS, while also influencing competition via regulation of biofilm matrix production. Is critical for colonization in the infant mouse model. This Vibrio cholerae serotype O1 (strain ATCC 39315 / El Tor Inaba N16961) protein is Transcriptional regulatory protein VxrB.